A 370-amino-acid chain; its full sequence is DNA replication and repair protein RecF (370 aa).

ATP is bound at residue Gly30–Thr37.

Belongs to the RecF family.

It is found in the cytoplasm. Functionally, the RecF protein is involved in DNA metabolism; it is required for DNA replication and normal SOS inducibility. RecF binds preferentially to single-stranded, linear DNA. It also seems to bind ATP. This is DNA replication and repair protein RecF from Bacteroides fragilis (strain ATCC 25285 / DSM 2151 / CCUG 4856 / JCM 11019 / LMG 10263 / NCTC 9343 / Onslow / VPI 2553 / EN-2).